The following is a 534-amino-acid chain: Membrane protein insertase YidC (534 aa).

The next 5 membrane-spanning stretches (helical) occupy residues 7-27, 319-339, 342-362, 413-433, and 493-513; these read IIAV…SEYM, AIDL…LDFF, YVGN…LVFW, GGCL…QALL, and VMMF…SGLV.

This sequence belongs to the OXA1/ALB3/YidC family. Type 1 subfamily. As to quaternary structure, interacts with the Sec translocase complex via SecD. Specifically interacts with transmembrane segments of nascent integral membrane proteins during membrane integration.

Its subcellular location is the cell inner membrane. In terms of biological role, required for the insertion and/or proper folding and/or complex formation of integral membrane proteins into the membrane. Involved in integration of membrane proteins that insert both dependently and independently of the Sec translocase complex, as well as at least some lipoproteins. Aids folding of multispanning membrane proteins. The polypeptide is Membrane protein insertase YidC (Nitratidesulfovibrio vulgaris (strain ATCC 29579 / DSM 644 / CCUG 34227 / NCIMB 8303 / VKM B-1760 / Hildenborough) (Desulfovibrio vulgaris)).